Here is a 251-residue protein sequence, read N- to C-terminus: Bidirectional sugar transporter SWEET4 (251 aa).

Over 1-12 (MVNATVARNIAG) the chain is Extracellular. A glycan (N-linked (GlcNAc...) asparagine) is linked at Asn3. One can recognise a MtN3/slv 1 domain in the interval 12–96 (GICGNVISLF…LAIFFFFSPT (85 aa)). Residues 13 to 33 (ICGNVISLFLFLSPIPTFITI) traverse the membrane as a helical segment. Residues 34-45 (YKKKKVEEYKAD) lie on the Cytoplasmic side of the membrane. The chain crosses the membrane as a helical span at residues 46–66 (PYLATVLNCALWVFYGLPMVQ). Residues 67–72 (PDSLLV) are Extracellular-facing. A helical membrane pass occupies residues 73-93 (ITINGTGLAIELVYLAIFFFF). The Cytoplasmic segment spans residues 94–103 (SPTSRKVKVG). A helical transmembrane segment spans residues 104 to 124 (LWLIGEMVFVGIVATCTLLLF). At 125–132 (HTHNQRSS) the chain is on the extracellular side. A helical membrane pass occupies residues 133-153 (FVGIFCVIFVSLMYIAPLTIM). Residues 133 to 216 (FVGIFCVIFV…LILYACYYKT (84 aa)) form the MtN3/slv 2 domain. Residues 154 to 163 (SKVIKTKSVK) are Cytoplasmic-facing. A helical transmembrane segment spans residues 164 to 186 (YMPFSLSLANFLNGVVWVIYALI). Residues 187–190 (KFDL) lie on the Extracellular side of the membrane. A helical transmembrane segment spans residues 191 to 213 (FILIGNGLGTVSGAVQLILYACY). Residues 214 to 251 (YKTTPKDDEDEEDEENLSKVNSQLQLSGNSGQAKRVSA) are Cytoplasmic-facing. Positions 220–251 (DDEDEEDEENLSKVNSQLQLSGNSGQAKRVSA) are disordered. The span at 231–245 (SKVNSQLQLSGNSGQ) shows a compositional bias: polar residues.

Belongs to the SWEET sugar transporter family. As to quaternary structure, forms homooligomers and heterooligomers with SWEET8 and SWEET17.

The protein resides in the cell membrane. Its function is as follows. Mediates both low-affinity uptake and efflux of sugar across the plasma membrane. The chain is Bidirectional sugar transporter SWEET4 from Arabidopsis thaliana (Mouse-ear cress).